The sequence spans 265 residues: Chlorophyll a-b binding protein 1C, chloroplastic (265 aa).

A chloroplast-targeting transit peptide spans 1–34 (MAAATMALSSPSFAGQAVKLSPSASEISGNGRIT). A helical membrane pass occupies residues 151–171 (LVHAQSILAIWACQVVLMGAV). Positions 152, 156, 164, 172, 175, and 181 each coordinate chlorophyll b. Residues Lys212, Glu213, Asn216, Arg218, Gln230, His245, and Ala254 each coordinate chlorophyll a. A helical membrane pass occupies residues 219–239 (LAMFSMFGFFVQAIVTGKGPL). Position 261 (Phe261) interacts with chlorophyll b.

This sequence belongs to the light-harvesting chlorophyll a/b-binding (LHC) protein family. In terms of assembly, the LHC complex consists of chlorophyll a-b binding proteins. Binds at least 14 chlorophylls (8 Chl-a and 6 Chl-b) and carotenoids such as lutein and neoxanthin. is required as a cofactor. In terms of processing, photoregulated by reversible phosphorylation of its threonine residues.

The protein resides in the plastid. It localises to the chloroplast thylakoid membrane. Functionally, the light-harvesting complex (LHC) functions as a light receptor, it captures and delivers excitation energy to photosystems with which it is closely associated. The sequence is that of Chlorophyll a-b binding protein 1C, chloroplastic (CAB1C) from Solanum lycopersicum (Tomato).